A 31-amino-acid polypeptide reads, in one-letter code: Cytochrome b6-f complex subunit 6 (31 aa).

A helical membrane pass occupies residues Leu-4 to Gly-24.

This sequence belongs to the PetL family. The 4 large subunits of the cytochrome b6-f complex are cytochrome b6, subunit IV (17 kDa polypeptide, PetD), cytochrome f and the Rieske protein, while the 4 small subunits are PetG, PetL, PetM and PetN. The complex functions as a dimer.

Its subcellular location is the plastid. It is found in the chloroplast thylakoid membrane. Its function is as follows. Component of the cytochrome b6-f complex, which mediates electron transfer between photosystem II (PSII) and photosystem I (PSI), cyclic electron flow around PSI, and state transitions. PetL is important for photoautotrophic growth as well as for electron transfer efficiency and stability of the cytochrome b6-f complex. This is Cytochrome b6-f complex subunit 6 from Adiantum capillus-veneris (Maidenhair fern).